Here is a 445-residue protein sequence, read N- to C-terminus: MGGVGEPGPREGPAQPGAPLPTFCWEQIRAHDQPGDKWLVIERRVYDISRWAQRHPGGSRLIGHHGAEDATDAFRAFHQDLNFVRKFLQPLLIGELAPEEPSQDGPLNAQLVEDFRALHQAAEDMKLFDASPTFFAFLLGHILAMEVLAWLLIYLLGPGWVPSALAAFILAISQAQSWCLQHDLGHASIFKKSWWNHVAQKFVMGQLKGFSAHWWNFRHFQHHAKPNIFHKDPDVTVAPVFLLGESSVEYGKKKRRYLPYNQQHLYFFLIGPPLLTLVNFEVENLAYMLVCMQWADLLWAASFYARFFLSYLPFYGVPGVLLFFVAVRVLESHWFVWITQMNHIPKEIGHEKHRDWVSSQLAATCNVEPSLFTNWFSGHLNFQIEHHLFPRMPRHNYSRVAPLVKSLCAKHGLSYEVKPFLTALVDIVRSLKKSGDIWLDAYLHQ.

A disordered region spans residues 1-21; the sequence is MGGVGEPGPREGPAQPGAPLP. The Cytoplasmic segment spans residues 1–133; that stretch reads MGGVGEPGPR…DMKLFDASPT (133 aa). A Cytochrome b5 heme-binding domain is found at 20–97; that stretch reads LPTFCWEQIR…LQPLLIGELA (78 aa). Residues 134–154 traverse the membrane as a helical segment; the sequence is FFAFLLGHILAMEVLAWLLIY. Residues 155-159 lie on the Lumenal side of the membrane; the sequence is LLGPG. A helical membrane pass occupies residues 160-180; it reads WVPSALAAFILAISQAQSWCL. Over 181–263 the chain is Cytoplasmic; it reads QHDLGHASIF…KRRYLPYNQQ (83 aa). A Histidine box-1 motif is present at residues 182-186; it reads HDLGH. Residues 219 to 223 carry the Histidine box-2 motif; sequence HFQHH. A helical membrane pass occupies residues 264-284; sequence HLYFFLIGPPLLTLVNFEVEN. Topologically, residues 285–306 are lumenal; that stretch reads LAYMLVCMQWADLLWAASFYAR. The helical transmembrane segment at 307–327 threads the bilayer; it reads FFLSYLPFYGVPGVLLFFVAV. Residues 328–445 are Cytoplasmic-facing; that stretch reads RVLESHWFVW…DIWLDAYLHQ (118 aa). A Histidine box-3 motif is present at residues 383 to 387; the sequence is QIEHH.

This sequence belongs to the fatty acid desaturase type 1 family. In terms of tissue distribution, highly expressed in various organs and tissues including liver, kidney, brain, lung, pancreas, testis, ovary and skeletal muscle (at protein level).

The protein resides in the endoplasmic reticulum membrane. The catalysed reaction is an N-acylsphing-4-enine + 2 Fe(II)-[cytochrome b5] + O2 + 2 H(+) = an N-acyl-sphinga-4E,14Z-dienine + 2 Fe(III)-[cytochrome b5] + 2 H2O. It catalyses the reaction N-(hexanoyl)sphing-4-enine + 2 Fe(II)-[cytochrome b5] + O2 + 2 H(+) = N-hexanoyl-sphinga-4E,14Z-dienine + 2 Fe(III)-[cytochrome b5] + 2 H2O. It carries out the reaction sphing-4-enine + 2 Fe(II)-[cytochrome b5] + O2 + 2 H(+) = sphinga-4E,14Z-dienine + 2 Fe(III)-[cytochrome b5] + 2 H2O. The enzyme catalyses (11E)-octadecenoyl-CoA + 2 Fe(II)-[cytochrome b5] + O2 + 2 H(+) = (11E,13Z)-octadecadienoyl-CoA + 2 Fe(III)-[cytochrome b5] + 2 H2O. The catalysed reaction is N-acyl-1-deoxysphinganine + 2 Fe(II)-[cytochrome b5] + O2 + 2 H(+) = N-acyl-1-deoxysphing-14Z-enine + 2 Fe(III)-[cytochrome b5] + 2 H2O. It catalyses the reaction an N-acylsphinganine + 2 Fe(II)-[cytochrome b5] + O2 + 2 H(+) = an N-acylsphing-14Z-enine + 2 Fe(III)-[cytochrome b5] + 2 H2O. Its pathway is lipid metabolism; sphingolipid metabolism. It functions in the pathway lipid metabolism; polyunsaturated fatty acid biosynthesis. Its function is as follows. Mammals have different sphingoid bases that differ in their length and/or pattern of desaturation and hydroxyl groups. The predominant sphingoid base that comprises mammalian ceramides is sphing-4-enine (sphingosine or SPH) which has a trans (E) desaturation at carbon 4. FADS3 is a desaturase that introduces a cis (Z) double bond between carbon 14 and carbon 15 of the sphingoid base (also known as long chain base, LCB), producing LCBs such as sphinga-4,14-dienine (SPD, d18:2(4E,14Z)) from SPH. Prefers SPH-containing ceramides (N-acylsphing-4-enines) as substrates. Capable of metabolizing also the SPH in its free form. SPD ceramides occur widely in mammalian tissues and cells. Due to their unusual structure containing a cis double bond, SPD ceramides may have an opposite, negative role in lipid microdomain formation relative to conventional ceramides. Could be involved in the detoxification of 1-deoxy sphingolipids, by desaturating the cytotoxic 1-deoxysphinganine (1-deoxySA, m18:0), produced under pathological conditions, to 1-deoxysphingenine (1-deoxysphingosine, 1-deoxySO, m18:1). Although prefers SPH-containing ceramides (N-acylsphing-4-enines) as substrates, it also exhibits activity toward dihydrosphingosine-containing CERs (N-acylsphinganines) and produces 14Z-SPH-containing sphingolipids,which can be found in patients with DEGS1 mutations. Its desaturase mechanism involves an electron transfer facilitated by cytochrome b5. FADS3 also acts as a methyl-end fatty acyl coenzyme A (CoA) desaturase that introduces a cis double bond between the preexisting double bond and the terminal methyl group of the fatty acyl chain. Desaturates (11E)-octadecenoate (trans-vaccenoate, the predominant trans fatty acid in human milk) at carbon 13 to generate (11E,13Z)-octadecadienoate (also known as conjugated linoleic acid 11E,13Z-CLA). The chain is Fatty acid desaturase 3 from Homo sapiens (Human).